The chain runs to 273 residues: Thiazole synthase (273 aa).

Lys-111 functions as the Schiff-base intermediate with DXP in the catalytic mechanism. 1-deoxy-D-xylulose 5-phosphate is bound by residues Gly-172, 198 to 199, and 220 to 221; these read AG and NS. The tract at residues 251–273 is disordered; the sequence is RLPRRGQASASSPTTGLISGKDK. Polar residues predominate over residues 258 to 267; it reads ASASSPTTGL.

It belongs to the ThiG family. In terms of assembly, homotetramer. Forms heterodimers with either ThiH or ThiS.

The protein resides in the cytoplasm. It catalyses the reaction [ThiS sulfur-carrier protein]-C-terminal-Gly-aminoethanethioate + 2-iminoacetate + 1-deoxy-D-xylulose 5-phosphate = [ThiS sulfur-carrier protein]-C-terminal Gly-Gly + 2-[(2R,5Z)-2-carboxy-4-methylthiazol-5(2H)-ylidene]ethyl phosphate + 2 H2O + H(+). Its pathway is cofactor biosynthesis; thiamine diphosphate biosynthesis. In terms of biological role, catalyzes the rearrangement of 1-deoxy-D-xylulose 5-phosphate (DXP) to produce the thiazole phosphate moiety of thiamine. Sulfur is provided by the thiocarboxylate moiety of the carrier protein ThiS. In vitro, sulfur can be provided by H(2)S. The chain is Thiazole synthase from Synechococcus sp. (strain CC9902).